The chain runs to 280 residues: Transcription factor HES-1 (280 aa).

Residues 1-44 are disordered; sequence MPADIMEKNSSSPVAATPASVNTTPDKPKTASEHRKSSKPIMEK. The span at 10 to 21 shows a compositional bias: low complexity; the sequence is SSSPVAATPASV. Basic and acidic residues predominate over residues 26–35; it reads DKPKTASEHR. Residues 34 to 91 enclose the bHLH domain; sequence HRKSSKPIMEKRRRARINESLSQLKTLILDALKKDSSRHSKLEKADILEMTVKHLRNL. The 34-residue stretch at 110-143 folds into the Orange domain; that stretch reads YRAGFSECMNEVTRFLSTCEGVNTEVRTRLLGHL. 2 disordered regions span residues 157-200 and 254-280; these read GQPH…PPGG and TSVG…PWRN. Pro residues-rich tracts occupy residues 164 to 174 and 181 to 200; these read QAPPPPPPGPG and FAPP…PPGG. A compositionally biased stretch (polar residues) spans 254-271; it reads TSVGPNAVSPSSGPSLTA. Residues 275–278 carry the WRPW motif motif; the sequence is WRPW.

As to quaternary structure, transcription repression requires formation of a complex with a corepressor protein of the Groucho/TLE family. Interacts with SIRT1. Interacts (via WPRW motif) with TLE1, and more weakly with TLE2. Interacts with HES6. Interacts with an FA complex, composed of FANCA, FANCF, FANCG and FANCL, but not of FANCC, nor FANCE.

It localises to the nucleus. Transcriptional repressor of genes that require a bHLH protein for their transcription. May act as a negative regulator of myogenesis by inhibiting the functions of MYOD1 and ASH1. Binds DNA on N-box motifs: 5'-CACNAG-3' with high affinity and on E-box motifs: 5'-CANNTG-3' with low affinity. May play a role in a functional FA core complex response to DNA cross-link damage, being required for the stability and nuclear localization of FA core complex proteins, as well as for FANCD2 monoubiquitination in response to DNA damage. This is Transcription factor HES-1 (HES1) from Bos taurus (Bovine).